The chain runs to 388 residues: 1-deoxy-D-xylulose 5-phosphate reductoisomerase (388 aa).

The NADPH site is built by Thr10, Gly11, Ser12, Ile13, Lys37, Asn38, and Asn123. A 1-deoxy-D-xylulose 5-phosphate-binding site is contributed by Lys124. An NADPH-binding site is contributed by Glu125. Asp149 serves as a coordination point for Mn(2+). The 1-deoxy-D-xylulose 5-phosphate site is built by Ser150, Glu151, Ser175, and His198. Glu151 lines the Mn(2+) pocket. NADPH is bound at residue Gly204. The 1-deoxy-D-xylulose 5-phosphate site is built by Ser211, Asn216, Lys217, and Glu220. Glu220 is a Mn(2+) binding site.

It belongs to the DXR family. The cofactor is Mg(2+). Requires Mn(2+) as cofactor.

It carries out the reaction 2-C-methyl-D-erythritol 4-phosphate + NADP(+) = 1-deoxy-D-xylulose 5-phosphate + NADPH + H(+). It participates in isoprenoid biosynthesis; isopentenyl diphosphate biosynthesis via DXP pathway; isopentenyl diphosphate from 1-deoxy-D-xylulose 5-phosphate: step 1/6. Catalyzes the NADPH-dependent rearrangement and reduction of 1-deoxy-D-xylulose-5-phosphate (DXP) to 2-C-methyl-D-erythritol 4-phosphate (MEP). The sequence is that of 1-deoxy-D-xylulose 5-phosphate reductoisomerase from Pelagibacter ubique (strain HTCC1062).